The sequence spans 455 residues: Nuclear distribution protein nudF (455 aa).

Positions 9–41 (QAEELHKSMIAYLVASDLPDTAAALRREVNLSE) constitute a LisH domain. A coiled-coil region spans residues 61–88 (TSIARLQKKIMDLESRNATLQSELDNST). WD repeat units lie at residues 113–154 (SHRD…RTLK), 156–196 (HTRA…KNIR), 200–239 (GHDH…CVKT), 242–281 (GHTD…NIEH), 287–347 (GHEN…LMTL), 349–388 (GHDS…KCVK), 392–438 (AHES…IQMR), and 440–455 (VVAT…IFAG). The segment at 408 to 431 (KNVPGGDGAAEGEGNDKNGAGSEN) is disordered.

It belongs to the WD repeat LIS1/nudF family. Self-associates. Interacts with nudE and dynein.

It is found in the cytoplasm. The protein localises to the cytoskeleton. The protein resides in the spindle pole. In terms of biological role, positively regulates the activity of the minus-end directed microtubule motor protein dynein. May enhance dynein-mediated microtubule sliding by targeting dynein to the microtubule plus end. Required for nuclear migration during vegetative growth as well as development. Required for retrograde early endosome (EE) transport from the hyphal tip. Required for localization of dynein to the mitotic spindle poles. Recruits additional proteins to the dynein complex at SPBs. This chain is Nuclear distribution protein nudF, found in Aspergillus flavus (strain ATCC 200026 / FGSC A1120 / IAM 13836 / NRRL 3357 / JCM 12722 / SRRC 167).